Consider the following 71-residue polypeptide: uncharacterized protein (71 aa).

It localises to the mitochondrion matrix. The protein localises to the kinetoplast. This is an uncharacterized protein from Trypanosoma brucei brucei.